A 279-amino-acid chain; its full sequence is Large ribosomal subunit protein uL2 (279 aa).

2 disordered regions span residues 29–49 (PVKQ…NGRV) and 202–279 (NASI…KKKG). Over residues 36–49 (GKSSSGGRNNNGRV) the composition is skewed to low complexity. Basic residues predominate over residues 209 to 220 (GRSRWLGRRPHN).

This sequence belongs to the universal ribosomal protein uL2 family. As to quaternary structure, part of the 50S ribosomal subunit. Forms a bridge to the 30S subunit in the 70S ribosome.

In terms of biological role, one of the primary rRNA binding proteins. Required for association of the 30S and 50S subunits to form the 70S ribosome, for tRNA binding and peptide bond formation. It has been suggested to have peptidyltransferase activity; this is somewhat controversial. Makes several contacts with the 16S rRNA in the 70S ribosome. The chain is Large ribosomal subunit protein uL2 from Beijerinckia indica subsp. indica (strain ATCC 9039 / DSM 1715 / NCIMB 8712).